A 149-amino-acid chain; its full sequence is UPF0260 protein Pmen_1776 (149 aa).

This sequence belongs to the UPF0260 family.

This is UPF0260 protein Pmen_1776 from Ectopseudomonas mendocina (strain ymp) (Pseudomonas mendocina).